The chain runs to 78 residues: Kassorin-S (78 aa).

The N-terminal stretch at 1–22 is a signal peptide; the sequence is MLTLKKSMLLLFFLGMVSLSLA. Residues 23–64 constitute a propeptide that is removed on maturation; the sequence is NSKRADEEGEDKRADEEGEDKRADEEGEDKRADEEGEEKRKR. A disordered region spans residues 24–60; that stretch reads SKRADEEGEDKRADEEGEDKRADEEGEDKRADEEGEE. Over residues 25-60 the composition is skewed to basic and acidic residues; that stretch reads KRADEEGEDKRADEEGEDKRADEEGEDKRADEEGEE. Residue L77 is modified to Leucine amide.

Belongs to the frog skin active peptide (FSAP) family. Brevinin subfamily. Expressed by the skin glands.

It is found in the secreted. Functionally, antimicrobial peptide. Active against the Gram-positive bacterium S.aureus (MIC=30 uM) and the yeast C.albicans (MIC=100 uM). Not effective against the Gram-negative bacterium E.coli at concentrations up to 250 uM. Lacks ability to induce contraction of smooth muscle in isolated guinea pig urinary bladder. Elicits histamine release from rat peritoneal mast cells. The sequence is that of Kassorin-S from Kassina senegalensis (Senegal running frog).